The chain runs to 75 residues: Dermaseptin-S11 (75 aa).

The first 22 residues, 1 to 22, serve as a signal peptide directing secretion; the sequence is MAFLKKSLFLVLFLGMVSLSIC. A propeptide spanning residues 23 to 45 is cleaved from the precursor; that stretch reads EEEKRENEDEEEQEDDEQSEEKR. Positions 25 to 44 are disordered; sequence EKRENEDEEEQEDDEQSEEK. Acidic residues predominate over residues 30–41; the sequence is EDEEEQEDDEQS.

This sequence belongs to the frog skin active peptide (FSAP) family. Dermaseptin subfamily. Expressed by the skin glands.

It localises to the secreted. Its subcellular location is the target cell membrane. Functionally, antimicrobial peptide with activity against Gram-positive and Gram-negative bacteria, and fungi. Has hemolytic activity. The chain is Dermaseptin-S11 from Phyllomedusa sauvagei (Sauvage's leaf frog).